A 1367-amino-acid chain; its full sequence is Paired amphipathic helix protein Sin3-like 2 (1367 aa).

Positions 14–44 (QFKRPLGSSRGESYEQSPITGGGSIGEGGIN) are disordered. The span at 33 to 42 (TGGGSIGEGG) shows a compositional bias: gly residues. PAH domains lie at 46–116 (QKLT…LPKG) and 130–200 (KTVE…LPDS). The disordered stretch occupies residues 212 to 322 (SQAQRYDDRG…EAYSGPASHS (111 aa)). 2 stretches are compositionally biased toward basic and acidic residues: residues 230-286 (MFME…SRDL) and 299-311 (FSEK…RMEG). The PAH 3 domain maps to 327-396 (LKSMYNQAFL…DEFNQFFERC (70 aa)). Disordered stretches follow at residues 417-446 (EENL…KERS), 786-883 (DVHA…LSKP), 912-946 (QSDT…DSED), and 958-1031 (ATAK…EGME). Composition is skewed to basic and acidic residues over residues 424-446 (VKGE…KERS) and 806-819 (SSGK…DLAN). Composition is skewed to polar residues over residues 851–876 (ATSS…SSGS) and 912–923 (QSDTSKANSNYD). A compositionally biased stretch (basic and acidic residues) spans 958-967 (ATAKTEHSVE). Acidic residues-rich tracts occupy residues 968-989 (AEGE…EAGE) and 997-1016 (IGDE…EHDE). Ser1023 is modified (phosphoserine).

It localises to the nucleus. Its function is as follows. Acts as a transcriptional repressor. Plays roles in regulating gene expression and genome stability. The chain is Paired amphipathic helix protein Sin3-like 2 (SNL2) from Arabidopsis thaliana (Mouse-ear cress).